We begin with the raw amino-acid sequence, 121 residues long: Large ribosomal subunit protein bL21c (121 aa).

This sequence belongs to the bacterial ribosomal protein bL21 family. Part of the 50S ribosomal subunit.

It localises to the plastid. Its subcellular location is the chloroplast. Functionally, this protein binds to 23S rRNA. In Chaetosphaeridium globosum (Charophycean green alga), this protein is Large ribosomal subunit protein bL21c.